The primary structure comprises 481 residues: Cysteine--tRNA ligase (481 aa).

Residue Cys43 coordinates Zn(2+). The 'HIGH' region signature appears at 45–55; sequence ATVQGLPHIGH. Zn(2+) contacts are provided by Cys221, His246, and Glu250. The short motif at 277-281 is the 'KMSKS' region element; it reads KMSKS. Lys280 serves as a coordination point for ATP.

It belongs to the class-I aminoacyl-tRNA synthetase family. As to quaternary structure, monomer. Zn(2+) is required as a cofactor.

Its subcellular location is the cytoplasm. The enzyme catalyses tRNA(Cys) + L-cysteine + ATP = L-cysteinyl-tRNA(Cys) + AMP + diphosphate. This Mycobacterium sp. (strain JLS) protein is Cysteine--tRNA ligase.